The sequence spans 280 residues: Inner kinetochore subunit fta1 (280 aa).

The protein belongs to the CENP-L/IML3 family. Component of the inner kinetochore constitutive centromere-associated network (CCAN) (also known as central kinetochore Sim4 complex in fission yeast), which is composed of at least cnl2, cnp3, cnp20, fta1, fta2, fta3, fta4, fta6, fta7, mal2, mhf1, mhf2, mis6, mis15, mis17, sim4 and wip1.

Its subcellular location is the nucleus. The protein resides in the chromosome. It localises to the centromere. The protein localises to the kinetochore. Component of the kinetochore, a multiprotein complex that assembles on centromeric DNA and attaches chromosomes to spindle microtubules, mediating chromosome segregation and sister chromatid segregation during meiosis and mitosis. Component of the inner kinetochore constitutive centromere-associated network (CCAN), which serves as a structural platform for outer kinetochore assembly. This Schizosaccharomyces pombe (strain 972 / ATCC 24843) (Fission yeast) protein is Inner kinetochore subunit fta1 (fta1).